A 55-amino-acid polypeptide reads, in one-letter code: uncharacterized protein (55 aa).

Residues 1–15 (MVGQEQLESSPLCQH) are compositionally biased toward polar residues. Positions 1–26 (MVGQEQLESSPLCQHSDNETETKREC) are disordered. Positions 16-26 (SDNETETKREC) are enriched in basic and acidic residues.

This is an uncharacterized protein from Escherichia coli (strain K12).